The following is a 370-amino-acid chain: tRNA-specific 2-thiouridylase MnmA (370 aa).

ATP is bound by residues 12–19 and M38; that span reads GLSGGVDS. Positions 98 to 100 are interaction with target base in tRNA; that stretch reads NPD. C103 acts as the Nucleophile in catalysis. C103 and C201 are joined by a disulfide. G127 contributes to the ATP binding site. Residues 151–153 are interaction with tRNA; sequence KDQ. The active-site Cysteine persulfide intermediate is the C201. An interaction with tRNA region spans residues 319–320; the sequence is RY.

This sequence belongs to the MnmA/TRMU family.

The protein localises to the cytoplasm. The catalysed reaction is S-sulfanyl-L-cysteinyl-[protein] + uridine(34) in tRNA + AH2 + ATP = 2-thiouridine(34) in tRNA + L-cysteinyl-[protein] + A + AMP + diphosphate + H(+). Its function is as follows. Catalyzes the 2-thiolation of uridine at the wobble position (U34) of tRNA, leading to the formation of s(2)U34. In Verminephrobacter eiseniae (strain EF01-2), this protein is tRNA-specific 2-thiouridylase MnmA.